A 90-amino-acid chain; its full sequence is U7-theraphotoxin-Hhn1f (90 aa).

An N-terminal signal peptide occupies residues 1 to 19 (MKTAIFTVVLALAVFAVLS). A propeptide spanning residues 20 to 50 (FGWEANEKALSEEFTELIHEKEAASETEARG) is cleaved from the precursor. Intrachain disulfides connect C51-C65, C58-C70, and C64-C81.

Belongs to the neurotoxin 10 (Hwtx-1) family. 13 (Hntx-13) subfamily. As to expression, expressed by the venom gland.

Its subcellular location is the secreted. Ion channel inhibitor. The sequence is that of U7-theraphotoxin-Hhn1f from Cyriopagopus hainanus (Chinese bird spider).